Here is an 80-residue protein sequence, read N- to C-terminus: Translation initiation factor IF-1 (80 aa).

Residues E6–K80 form the S1-like domain.

The protein belongs to the IF-1 family. As to quaternary structure, component of the 30S ribosomal translation pre-initiation complex which assembles on the 30S ribosome in the order IF-2 and IF-3, IF-1 and N-formylmethionyl-tRNA(fMet); mRNA recruitment can occur at any time during PIC assembly.

The protein localises to the cytoplasm. In terms of biological role, one of the essential components for the initiation of protein synthesis. Stabilizes the binding of IF-2 and IF-3 on the 30S subunit to which N-formylmethionyl-tRNA(fMet) subsequently binds. Helps modulate mRNA selection, yielding the 30S pre-initiation complex (PIC). Upon addition of the 50S ribosomal subunit IF-1, IF-2 and IF-3 are released leaving the mature 70S translation initiation complex. This Deinococcus geothermalis (strain DSM 11300 / CIP 105573 / AG-3a) protein is Translation initiation factor IF-1.